The following is a 424-amino-acid chain: Light-independent protochlorophyllide reductase subunit N (424 aa).

The [4Fe-4S] cluster site is built by cysteine 26, cysteine 51, and cysteine 112.

Belongs to the BchN/ChlN family. Protochlorophyllide reductase is composed of three subunits; BchL, BchN and BchB. Forms a heterotetramer of two BchB and two BchN subunits. [4Fe-4S] cluster is required as a cofactor.

The catalysed reaction is chlorophyllide a + oxidized 2[4Fe-4S]-[ferredoxin] + 2 ADP + 2 phosphate = protochlorophyllide a + reduced 2[4Fe-4S]-[ferredoxin] + 2 ATP + 2 H2O. It participates in porphyrin-containing compound metabolism; bacteriochlorophyll biosynthesis (light-independent). Functionally, component of the dark-operative protochlorophyllide reductase (DPOR) that uses Mg-ATP and reduced ferredoxin to reduce ring D of protochlorophyllide (Pchlide) to form chlorophyllide a (Chlide). This reaction is light-independent. The NB-protein (BchN-BchB) is the catalytic component of the complex. This is Light-independent protochlorophyllide reductase subunit N from Rhodobacter capsulatus (strain ATCC BAA-309 / NBRC 16581 / SB1003).